The following is a 339-amino-acid chain: Serpentine receptor class alpha-20 (339 aa).

6 consecutive transmembrane segments (helical) span residues 30 to 50 (VSFV…VLAI), 113 to 132 (LYFY…SLTF), 151 to 171 (VSIS…YFGL), 199 to 219 (FRTT…YLNV), 249 to 269 (CILI…VNYI), and 284 to 304 (IAPF…VIYF).

It belongs to the nematode receptor-like protein sra family.

Its subcellular location is the membrane. In Caenorhabditis elegans, this protein is Serpentine receptor class alpha-20 (sra-20).